We begin with the raw amino-acid sequence, 420 residues long: Probable ABC transporter-binding protein DR_1438 (420 aa).

The N-terminal stretch at 1–24 (MKKFAAVLGLTVAFAAASQAHAVT) is a signal peptide.

The protein belongs to the bacterial solute-binding protein 1 family.

Its function is as follows. Probably part of a binding-protein-dependent transport system. This Deinococcus radiodurans (strain ATCC 13939 / DSM 20539 / JCM 16871 / CCUG 27074 / LMG 4051 / NBRC 15346 / NCIMB 9279 / VKM B-1422 / R1) protein is Probable ABC transporter-binding protein DR_1438.